The primary structure comprises 201 residues: Prostamide/prostaglandin F synthase (201 aa).

The protein belongs to the peroxiredoxin-like PRXL2 family. Prostamide/prostaglandin F synthase subfamily.

Its subcellular location is the cytoplasm. It localises to the cytosol. The catalysed reaction is prostaglandin H2 + [thioredoxin]-dithiol = prostaglandin F2alpha + [thioredoxin]-disulfide. It catalyses the reaction prostamide F2alpha + [thioredoxin]-disulfide = prostamide H2 + [thioredoxin]-dithiol. In terms of biological role, catalyzes the reduction of prostaglandin-ethanolamide H(2) (prostamide H(2)) to prostamide F(2alpha) with NADPH as proton donor. Also able to reduce prostaglandin H(2) to prostaglandin F(2alpha). The protein is Prostamide/prostaglandin F synthase (prxl2b) of Xenopus tropicalis (Western clawed frog).